The chain runs to 507 residues: Histidine ammonia-lyase (507 aa).

Positions 141 to 143 (ASG) form a cross-link, 5-imidazolinone (Ala-Gly). Ser142 carries the 2,3-didehydroalanine (Ser) modification.

It belongs to the PAL/histidase family. Contains an active site 4-methylidene-imidazol-5-one (MIO), which is formed autocatalytically by cyclization and dehydration of residues Ala-Ser-Gly.

It localises to the cytoplasm. The enzyme catalyses L-histidine = trans-urocanate + NH4(+). It participates in amino-acid degradation; L-histidine degradation into L-glutamate; N-formimidoyl-L-glutamate from L-histidine: step 1/3. This is Histidine ammonia-lyase from Cereibacter sphaeroides (strain ATCC 17023 / DSM 158 / JCM 6121 / CCUG 31486 / LMG 2827 / NBRC 12203 / NCIMB 8253 / ATH 2.4.1.) (Rhodobacter sphaeroides).